The primary structure comprises 107 residues: UPF0473 protein llmg_0152 (107 aa).

The protein belongs to the UPF0473 family.

This Lactococcus lactis subsp. cremoris (strain MG1363) protein is UPF0473 protein llmg_0152.